The following is a 531-amino-acid chain: Sop-2-related protein 3 (531 aa).

Expressed ubiquitously.

It localises to the cytoplasm. The protein localises to the nucleus. Probably acts synergistically with sop-2 to maintain the transcriptionally repressive state of homeotic genes in order to regulate various neurogenic identities. Specification of some neuronal identities also involves expression of non-Hox genes. Specifies dopaminergic and serotonergic neuronal cell fate, and regulates neurotransmitter choice and axon pathfinding. This is Sop-2-related protein 3 (sor-3) from Caenorhabditis elegans.